Here is a 311-residue protein sequence, read N- to C-terminus: Malate dehydrogenase (311 aa).

NAD(+) is bound by residues 7–13 and Asp-34; that span reads GAAGGIG. Residues Arg-81 and Arg-87 each contribute to the substrate site. NAD(+) is bound by residues Asn-94 and 117 to 119; that span reads ITN. Substrate contacts are provided by Asn-119 and Arg-153. His-177 serves as the catalytic Proton acceptor. NAD(+) is bound at residue Met-227.

Belongs to the LDH/MDH superfamily. MDH type 1 family. As to quaternary structure, homodimer.

The enzyme catalyses (S)-malate + NAD(+) = oxaloacetate + NADH + H(+). Its function is as follows. Catalyzes the reversible oxidation of malate to oxaloacetate. The sequence is that of Malate dehydrogenase from Yersinia enterocolitica serotype O:8 / biotype 1B (strain NCTC 13174 / 8081).